Reading from the N-terminus, the 228-residue chain is Urease accessory protein UreE (228 aa).

The interval 188–228 is disordered; sequence PLDEPHGSGLHIHAIHSHGDGHSHDHDHSHSHGDHDHDHKH. The span at 204–228 shows a compositional bias: basic and acidic residues; the sequence is SHGDGHSHDHDHSHSHGDHDHDHKH.

Belongs to the UreE family.

The protein resides in the cytoplasm. Involved in urease metallocenter assembly. Binds nickel. Probably functions as a nickel donor during metallocenter assembly. The chain is Urease accessory protein UreE from Yersinia kristensenii.